We begin with the raw amino-acid sequence, 356 residues long: Cdc42 effector protein 4 (356 aa).

Lys5 carries the post-translational modification N6-methyllysine. Ser18 is subject to Phosphoserine. A CRIB domain is found at 27–41; the sequence is ISAPLGDFRHTMHVG. The tract at residues 51–102 is disordered; sequence SFLNSKAGEPDGESLDEQPSSSSSKRSLLSRKFRGSKRSQSVTRGEREQRDM. Residue Ser64 is modified to Phosphoserine. Over residues 78–87 the composition is skewed to basic residues; sequence LLSRKFRGSK. Ser105, Ser109, and Ser118 each carry phosphoserine. 2 disordered regions span residues 122–182 and 257–356; these read LNEK…LDEQ and VAAP…EIRV. Positions 123–132 are enriched in basic and acidic residues; it reads NEKEAAEKGT. A compositionally biased stretch (low complexity) spans 133–143; sequence SKLPKSLSSSP. Residues Ser138, Ser140, Ser142, Ser174, Ser292, and Ser295 each carry the phosphoserine modification. Positions 287–315 are enriched in low complexity; the sequence is AAAAPSPGSARSMGSHTTRDSSSLSSCTS. Positions 318–344 are enriched in basic and acidic residues; sequence LEERSPAFRGPDRARAAVSRQPDKEFS. Over residues 345–356 the composition is skewed to acidic residues; sequence FMDEEEEDEIRV.

It belongs to the BORG/CEP family. In terms of assembly, interacts with CDC42 and RHOQ, in a GTP-dependent manner. As to expression, not detected in any of the adult tissues tested. May be expressed only in fetal or embryonic tissues.

The protein resides in the endomembrane system. The protein localises to the cytoplasm. It localises to the cytoskeleton. Probably involved in the organization of the actin cytoskeleton. May act downstream of CDC42 to induce actin filament assembly leading to cell shape changes. Induces pseudopodia formation, when overexpressed in fibroblasts. In Homo sapiens (Human), this protein is Cdc42 effector protein 4 (CDC42EP4).